The chain runs to 171 residues: ATP synthase subunit b (171 aa).

A helical transmembrane segment spans residues 2-22 (FLVKMVLGFLILLSPLCATGL).

It belongs to the ATPase B chain family. As to quaternary structure, F-type ATPases have 2 components, F(1) - the catalytic core - and F(0) - the membrane proton channel. F(1) has five subunits: alpha(3), beta(3), gamma(1), delta(1), epsilon(1). F(0) has three main subunits: a(1), b(2) and c(10-14). The alpha and beta chains form an alternating ring which encloses part of the gamma chain. F(1) is attached to F(0) by a central stalk formed by the gamma and epsilon chains, while a peripheral stalk is formed by the delta and b chains.

The protein localises to the cell inner membrane. F(1)F(0) ATP synthase produces ATP from ADP in the presence of a proton or sodium gradient. F-type ATPases consist of two structural domains, F(1) containing the extramembraneous catalytic core and F(0) containing the membrane proton channel, linked together by a central stalk and a peripheral stalk. During catalysis, ATP synthesis in the catalytic domain of F(1) is coupled via a rotary mechanism of the central stalk subunits to proton translocation. Functionally, component of the F(0) channel, it forms part of the peripheral stalk, linking F(1) to F(0). The protein is ATP synthase subunit b of Helicobacter pylori (strain HPAG1).